We begin with the raw amino-acid sequence, 152 residues long: MAVAMSMDANCPKNIFLLCRNTGIGFDDLRLHCIFCTKQLTTTELQAFALRELNVVWRRGAPYGACARCLLVEGIARRLKYWEYSYYVSGVEEETKQSIDTQQIRCYMCHKPLVKEEKDRHRNEKRRLHKISGHWRGSCQYCWSRCTVRIPR.

Zinc fingers lie at residues 33 to 69 and 106 to 142; these read CIFCTKQLTTTELQAFALRELNVVWRRGAPYGACARC and CYMCHKPLVKEEKDRHRNEKRRLHKISGHWRGSCQYC.

It belongs to the papillomaviridae E6 protein family. Forms homodimers. Interacts with ubiquitin-protein ligase UBE3A/E6-AP; this interaction stimulates UBE3A ubiquitin activity. Interacts with host TP53 and EP300; this interaction inhibits TP53 activity.

The protein localises to the host cytoplasm. The protein resides in the host nucleus. In terms of biological role, plays a major role in the induction and maintenance of cellular transformation. E6 associates with host UBE3A/E6-AP ubiquitin-protein ligase and modulates its activity. Sequesters tumor suppressor TP53 in the host cytoplasm and modulates its activity by interacting with host EP300 that results in the reduction of TP53 acetylation and activation. In turn, apoptosis induced by DNA damage is inhibited. E6 also protects host keratinocytes from apoptosis by mediating the degradation of host BAK1. May also inhibit host immune response. The polypeptide is Protein E6 (Human papillomavirus 3).